A 338-amino-acid polypeptide reads, in one-letter code: Galaxin (338 aa).

Positions 1-23 (MKPSGAFLSLCVVLLSLATHCFS) are cleaved as a signal peptide. The segment covering 30 to 47 (RRDAHSDTNALKSRDRRQ) has biased composition (basic and acidic residues). A disordered region spans residues 30 to 50 (RRDAHSDTNALKSRDRRQAPA).

Component of the acid-insoluble organic matrix of the aragonitic skeleton (at protein level). Initially, expressed in an aboral submarginal ring and then along calcifying septa.

The protein localises to the secreted. In Acropora millepora (Staghorn coral), this protein is Galaxin.